Here is a 546-residue protein sequence, read N- to C-terminus: Chaperonin GroEL (546 aa).

ATP contacts are provided by residues 29 to 32, Lys-50, 86 to 90, Gly-414, and Asp-492; these read TMGP and DGTTT.

This sequence belongs to the chaperonin (HSP60) family. As to quaternary structure, forms a cylinder of 14 subunits composed of two heptameric rings stacked back-to-back. Interacts with the co-chaperonin GroES.

The protein resides in the cytoplasm. The catalysed reaction is ATP + H2O + a folded polypeptide = ADP + phosphate + an unfolded polypeptide.. Together with its co-chaperonin GroES, plays an essential role in assisting protein folding. The GroEL-GroES system forms a nano-cage that allows encapsulation of the non-native substrate proteins and provides a physical environment optimized to promote and accelerate protein folding. In Helicobacter acinonychis (strain Sheeba), this protein is Chaperonin GroEL.